Reading from the N-terminus, the 160-residue chain is H/ACA ribonucleoprotein complex subunit 2 (160 aa).

Ser15 carries the phosphoserine modification. Thr23 is modified (phosphothreonine).

This sequence belongs to the eukaryotic ribosomal protein eL8 family. In terms of assembly, component of the box H/ACA small nucleolar ribonucleoprotein (H/ACA snoRNP) complex consisting of Nop60B, Gar1, NPH2 and Nop10, and associated with H/ACA-type snoRNAs.

Its subcellular location is the nucleus. The protein resides in the nucleolus. Its function is as follows. Component of the box H/ACA small nucleolar ribonucleoprotein (H/ACA snoRNP) complex, which catalyzes pseudouridylation of rRNA. This involves the isomerization of uridine such that the ribose is subsequently attached to C5, instead of the normal N1. Pseudouridine ('psi') residues may serve to stabilize the conformation of rRNAs. Required for ribosome biogenesis. H/ACA snoRNP complex-dependent ribosome biogenesis is important in female germline cell differentiation during oogenesis. This chain is H/ACA ribonucleoprotein complex subunit 2, found in Drosophila melanogaster (Fruit fly).